The sequence spans 860 residues: Paladin (860 aa).

A disordered region spans residues 1 to 24 (MGTTASAAPQATLHERLHSDSMTD). Residue Gly2 is the site of N-myristoyl glycine attachment. The segment covering 13–24 (LHERLHSDSMTD) has biased composition (basic and acidic residues).

Belongs to the paladin family.

It is found in the cytoplasm. It localises to the cytosol. This Danio rerio (Zebrafish) protein is Paladin (pald1).